A 795-amino-acid chain; its full sequence is MGDEKDSWKVKTLDEILQEKKRRKEQEEKAEIKRLKNSDDRDSKRDSLEEGELRDHRMEITIRNSPYRREDSMEDRGEEDDSLAIKPPQQMSRKEKAHHRKDEKRKEKRRHRSHSAEGGKHARVKEKEREHERRKRHREEQDKARREWERQKRREMAREHSRRERDRLEQLERKRERERKMREQQKEQREQKERERRAEERRKEREARREVSAHHRTMREDYSDKVKASHWSRSPPRPPRERFELGDGRKPGEARPAPAQKPAQLKEEKMEERDLLSDLQDISDSERKTSSAESSSAESGSGSEEEEEEEEEEEEEGSTSEESEEEEEEEEEEEEETGSNSEEASEQSAEEVSEEEMSEDEERENENHLLVVPESRFDRDSGESEEAEEEVGEGTPQSSALTEGDYVPDSPALSPIELKQELPKYLPALQGCRSVEEFQCLNRIEEGTYGVVYRAKDKKTDEIVALKRLKMEKEKEGFPITSLREINTILKAQHPNIVTVREIVVGSNMDKIYIVMNYVEHDLKSLMETMKQPFLPGEVKTLMIQLLRGVKHLHDNWILHRDLKTSNLLLSHAGILKVGDFGLAREYGSPLKAYTPVVVTLWYRAPELLLGAKEYSTAVDMWSVGCIFGELLTQKPLFPGKSEIDQINKVFKDLGTPSEKIWPGYSELPAVKKMTFSEHPYNNLRKRFGALLSDQGFDLMNKFLTYFPGRRISAEDGLKHEYFRETPLPIDPSMFPTWPAKSEQQRVKRGTSPRPPEGGLGYSQLGDDDLKETGFHLTTTNQGASAAGPGFSLKF.

Positions 17-60 (LQEKKRRKEQEEKAEIKRLKNSDDRDSKRDSLEEGELRDHRMEI) are enriched in basic and acidic residues. The interval 17–412 (LQEKKRRKEQ…EGDYVPDSPA (396 aa)) is disordered. Phosphoserine occurs at positions 47 and 72. A compositionally biased stretch (basic residues) spans 95-113 (EKAHHRKDEKRKEKRRHRS). Composition is skewed to basic and acidic residues over residues 114–131 (HSAEGGKHARVKEKEREH), 138–227 (REEQ…DKVK), 238–253 (PPRERFELGDGRKPGE), and 264–276 (QLKEEKMEERDLL). Residue serine 115 is modified to Phosphoserine. The residue at position 283 (serine 283) is a Phosphoserine. A compositionally biased stretch (low complexity) spans 291–302 (SAESSSAESGSG). Composition is skewed to acidic residues over residues 303 to 364 (SEEE…EERE) and 383 to 392 (ESEEAEEEVG). The 286-residue stretch at 438-723 (FQCLNRIEEG…AEDGLKHEYF (286 aa)) folds into the Protein kinase domain. ATP contacts are provided by residues 444–452 (IEEGTYGVV) and lysine 467. Residue serine 482 is modified to Phosphoserine; by CDK7. The residue at position 488 (threonine 488) is a Phosphothreonine; by CDK7. Aspartate 562 (proton acceptor) is an active-site residue. Serine 589 bears the Phosphoserine mark. Tyrosine 594 bears the Phosphotyrosine mark. A Phosphothreonine modification is found at threonine 595. A Glycyl lysine isopeptide (Lys-Gly) (interchain with G-Cter in SUMO2) cross-link involves residue lysine 641. The segment at 733 to 795 (SMFPTWPAKS…AAGPGFSLKF (63 aa)) is disordered. Threonine 751 carries the post-translational modification Phosphothreonine. At serine 752 the chain carries Phosphoserine.

This sequence belongs to the protein kinase superfamily. CMGC Ser/Thr protein kinase family. CDC2/CDKX subfamily. Cleaved isoform SV9 (p110C) binds to the serine/threonine kinase PAK1 and RANBP9. p110C interacts with RNPS1. Isoform 7, but not isoform SV9, nor its cleavage product p110C, interacts with CCND3. Interacts with CCNL1 and CCNL2. Forms complexes with pre-mRNA-splicing factors, including at least SRSF1, SRSF2 and SRSF7/SLU7. Interacts with isoform 5 of MYO18A. As to quaternary structure, (Microbial infection) Interacts with human herpes virus 1 (HHV-1) transcriptional regulator ICP22. Mg(2+) is required as a cofactor. In terms of processing, during FAS- or TNF-induced apoptosis, isoform SV9 is cleaved by caspases to produce p110C, a fragment that contains the C-terminal kinase domain. Phosphorylation at Ser-115 creates a binding site for 14-3-3 proteins. p110C can be autophosphorylated. Expressed ubiquitously. Some evidence of isoform-specific tissue distribution.

It is found in the cytoplasm. The protein resides in the nucleus. It carries out the reaction L-seryl-[protein] + ATP = O-phospho-L-seryl-[protein] + ADP + H(+). It catalyses the reaction L-threonyl-[protein] + ATP = O-phospho-L-threonyl-[protein] + ADP + H(+). With respect to regulation, phosphorylation at Thr-448 or Tyr-449 inactivates the enzyme, while phosphorylation at Thr-595 activates it. Plays multiple roles in cell cycle progression, cytokinesis and apoptosis. Involved in pre-mRNA splicing in a kinase activity-dependent manner. Isoform 7 may act as a negative regulator of normal cell cycle progression. This is Cyclin-dependent kinase 11B (CDK11B) from Homo sapiens (Human).